Consider the following 505-residue polypeptide: RNA-splicing ligase RtcB homolog (505 aa).

Mn(2+) is bound by residues aspartate 119, cysteine 122, histidine 227, and histidine 259. Position 226 to 230 (226 to 230) interacts with GMP; it reads NHYAE. Serine 300 carries the post-translational modification Phosphoserine. Residue histidine 353 participates in Mn(2+) binding. GMP contacts are provided by residues 353-354, 402-405, serine 409, and 428-431; these read HN, GGTM, and HGAG. The active-site GMP-histidine intermediate is histidine 428. Residue lysine 496 forms a Glycyl lysine isopeptide (Lys-Gly) (interchain with G-Cter in SUMO2) linkage. Lysine 504 contributes to the GMP binding site.

Belongs to the RtcB family. Catalytic component of the tRNA-splicing ligase complex. Mn(2+) is required as a cofactor.

It localises to the nucleus. Its subcellular location is the cytoplasm. It carries out the reaction a 3'-end 3'-phospho-ribonucleotide-RNA + a 5'-end dephospho-ribonucleoside-RNA + GTP = a ribonucleotidyl-ribonucleotide-RNA + GMP + diphosphate. It catalyses the reaction a 3'-end 2',3'-cyclophospho-ribonucleotide-RNA + a 5'-end dephospho-ribonucleoside-RNA + GTP + H2O = a ribonucleotidyl-ribonucleotide-RNA + GMP + diphosphate + H(+). With respect to regulation, protein archease stimulates the activity of the tRNA ligase complex with high efficiency in the presence of GTP. Catalytic subunit of the tRNA-splicing ligase complex that acts by directly joining spliced tRNA halves to mature-sized tRNAs by incorporating the precursor-derived splice junction phosphate into the mature tRNA as a canonical 3',5'-phosphodiester. May act as an RNA ligase with broad substrate specificity, and may function toward other RNAs. The sequence is that of RNA-splicing ligase RtcB homolog from Homo sapiens (Human).